We begin with the raw amino-acid sequence, 853 residues long: Envelope glycoprotein gp160 (853 aa).

The N-terminal stretch at 1 to 31 (MRVKEIRKNWQHLRGGILLLGMLMICSAAKE) is a signal peptide. Topologically, residues 32–681 (KTWVTIYYGV…ITNWLWYIRL (650 aa)) are extracellular. Cys53 and Cys73 are disulfide-bonded. Residues Asn87, Asn129, Asn134, Asn138, Asn157, Asn189, Asn199, Asn232, Asn236, Asn243, Asn264, Asn278, Asn291, Asn297, Asn303, Asn333, Asn340, Asn356, and Asn362 are each glycosylated (N-linked (GlcNAc...) asparagine; by host). 5 disulfides stabilise this stretch: Cys118-Cys207, Cys125-Cys198, Cys130-Cys158, Cys220-Cys249, and Cys230-Cys241. The interval 130–157 (CTNLNITKNTTNPTSSSWGMMEKGEIKN) is V1. A V2 region spans residues 158–198 (CSFYITTSIRNKVKKEYALFNRLDVVPIENTNNTKYRLISC). The segment at 298 to 331 (CTRPNNNTRRRLSIGPGRAFYARRNIIGDIRQAH) is V3. Cysteines 298 and 332 form a disulfide. The CD4-binding loop stretch occupies residues 364-374 (SSGGDPEIVMH). Disulfide bonds link Cys378–Cys441 and Cys385–Cys414. Positions 385 to 414 (CNTAQLFNSTWNVTGGTNGTEGNDIITLQC) are V4. N-linked (GlcNAc...) asparagine; by host glycans are attached at residues Asn392, Asn396, Asn402, Asn444, and Asn456. Positions 459–468 (ETETEIFRPG) are V5. The segment at 509–529 (AVGIGAVFLGFLGAAGSTMGA) is fusion peptide. The interval 571–589 (KQLQARVLALERYLRDQQL) is immunosuppression. Residues Cys595 and Cys601 are joined by a disulfide bond. N-linked (GlcNAc...) asparagine; by host glycosylation is found at Asn608, Asn613, Asn622, and Asn634. The stretch at 630 to 664 (REIDNYTDYIYDLLEKSQTQQEKNEKELLELDKWA) forms a coiled coil. Residues 659 to 680 (ELDKWASLWNWFDITNWLWYIR) form an MPER; binding to GalCer region. The helical transmembrane segment at 682–702 (FIMIVGGLIGLRIVFAVLSIV) threads the bilayer. Residues 703-853 (NRVRQGYSPL…IRQGLERALL (151 aa)) are Cytoplasmic-facing. Positions 709-712 (YSPL) match the YXXL motif; contains endocytosis signal motif. The tract at residues 718–740 (LPASRGPDRPEGTEEEGGERDRD) is disordered. S-palmitoyl cysteine; by host attachment occurs at residues Cys761 and Cys834. Positions 852-853 (LL) match the Di-leucine internalization motif motif.

The protein belongs to the HIV-1 env protein family. As to quaternary structure, the mature envelope protein (Env) consists of a homotrimer of non-covalently associated gp120-gp41 heterodimers. The resulting complex protrudes from the virus surface as a spike. There seems to be as few as 10 spikes on the average virion. Interacts with host CD4, CCR5 and CXCR4. Gp120 also interacts with the C-type lectins CD209/DC-SIGN and CLEC4M/DC-SIGNR (collectively referred to as DC-SIGN(R)). Gp120 and gp41 interact with GalCer. Gp120 interacts with host ITGA4/ITGB7 complex; on CD4+ T-cells, this interaction results in rapid activation of integrin ITGAL/LFA-1, which facilitates efficient cell-to-cell spreading of HIV-1. Gp120 interacts with cell-associated heparan sulfate; this interaction increases virus infectivity on permissive cells and may be involved in infection of CD4- cells. The mature envelope protein (Env) consists of a homotrimer of non-covalently associated gp120-gp41 heterodimers. The resulting complex protrudes from the virus surface as a spike. There seems to be as few as 10 spikes on the average virion. Post-translationally, highly glycosylated by host. The high number of glycan on the protein is reffered to as 'glycan shield' because it contributes to hide protein sequence from adaptive immune system. In terms of processing, palmitoylation of the transmembrane protein and of Env polyprotein (prior to its proteolytic cleavage) is essential for their association with host cell membrane lipid rafts. Palmitoylation is therefore required for envelope trafficking to classical lipid rafts, but not for viral replication. Specific enzymatic cleavages in vivo yield mature proteins. Envelope glycoproteins are synthesized as an inactive precursor that is heavily N-glycosylated and processed likely by host cell furin in the Golgi to yield the mature SU and TM proteins. The cleavage site between SU and TM requires the minimal sequence [KR]-X-[KR]-R. About 2 of the 9 disulfide bonds of gp41 are reduced by P4HB/PDI, following binding to CD4 receptor.

It is found in the virion membrane. It localises to the host cell membrane. The protein localises to the host endosome membrane. In terms of biological role, oligomerizes in the host endoplasmic reticulum into predominantly trimers. In a second time, gp160 transits in the host Golgi, where glycosylation is completed. The precursor is then proteolytically cleaved in the trans-Golgi and thereby activated by cellular furin or furin-like proteases to produce gp120 and gp41. Attaches the virus to the host lymphoid cell by binding to the primary receptor CD4. This interaction induces a structural rearrangement creating a high affinity binding site for a chemokine coreceptor like CXCR4 and/or CCR5. Acts as a ligand for CD209/DC-SIGN and CLEC4M/DC-SIGNR, which are respectively found on dendritic cells (DCs), and on endothelial cells of liver sinusoids and lymph node sinuses. These interactions allow capture of viral particles at mucosal surfaces by these cells and subsequent transmission to permissive cells. HIV subverts the migration properties of dendritic cells to gain access to CD4+ T-cells in lymph nodes. Virus transmission to permissive T-cells occurs either in trans (without DCs infection, through viral capture and transmission), or in cis (following DCs productive infection, through the usual CD4-gp120 interaction), thereby inducing a robust infection. In trans infection, bound virions remain infectious over days and it is proposed that they are not degraded, but protected in non-lysosomal acidic organelles within the DCs close to the cell membrane thus contributing to the viral infectious potential during DCs' migration from the periphery to the lymphoid tissues. On arrival at lymphoid tissues, intact virions recycle back to DCs' cell surface allowing virus transmission to CD4+ T-cells. Its function is as follows. Acts as a class I viral fusion protein. Under the current model, the protein has at least 3 conformational states: pre-fusion native state, pre-hairpin intermediate state, and post-fusion hairpin state. During fusion of viral and target intracellular membranes, the coiled coil regions (heptad repeats) assume a trimer-of-hairpins structure, positioning the fusion peptide in close proximity to the C-terminal region of the ectodomain. The formation of this structure appears to drive apposition and subsequent fusion of viral and target cell membranes. Complete fusion occurs in host cell endosomes and is dynamin-dependent, however some lipid transfer might occur at the plasma membrane. The virus undergoes clathrin-dependent internalization long before endosomal fusion, thus minimizing the surface exposure of conserved viral epitopes during fusion and reducing the efficacy of inhibitors targeting these epitopes. Membranes fusion leads to delivery of the nucleocapsid into the cytoplasm. The protein is Envelope glycoprotein gp160 of Human immunodeficiency virus type 1 group M subtype B (strain 89.6) (HIV-1).